Here is a 452-residue protein sequence, read N- to C-terminus: Phosphoglucosamine mutase (452 aa).

The active-site Phosphoserine intermediate is Ser97. The Mg(2+) site is built by Ser97, Asp236, Asp238, and Asp240. Ser97 bears the Phosphoserine mark.

Belongs to the phosphohexose mutase family. The cofactor is Mg(2+). In terms of processing, activated by phosphorylation.

The catalysed reaction is alpha-D-glucosamine 1-phosphate = D-glucosamine 6-phosphate. Functionally, catalyzes the conversion of glucosamine-6-phosphate to glucosamine-1-phosphate. The chain is Phosphoglucosamine mutase from Prochlorococcus marinus subsp. pastoris (strain CCMP1986 / NIES-2087 / MED4).